A 91-amino-acid chain; its full sequence is DNA-binding protein HRL18 (91 aa).

This sequence belongs to the bacterial histone-like protein family.

Functionally, histone-like DNA-binding protein which is capable of wrapping DNA to stabilize it, and thus to prevent its denaturation under extreme environmental conditions. The polypeptide is DNA-binding protein HRL18 (Rhizobium leguminosarum).